A 299-amino-acid chain; its full sequence is MKPDAHQVKQFLLNLQDTICQQLTAVDGAEFVEDSWQREAGGGGRSRVLRNDGVFEQAGVNFSHVHGEAMPASATAHRPELAGRSFEAMGVSLVVHPHNPYVPTSHANVRFFIAEKPGAEPVWWFGGGFDLTPFYGFEEDAIHWHRTARDLCLPFGEDVYPRYKKWCDDYFYLKHRNEQRGIGGLFFDDLNTPDFDHCFAFMQAVGKGYTDAYLPIVERRKAMAYGERERNFQLYRRGRYVEFNLVWDRGTLFGLQTGGRTESILMSMPPLVRWEYDYQPKDGSPEAALSEFIKVRDWV.

Serine 92 contacts substrate. A divalent metal cation is bound by residues histidine 96 and histidine 106. The active-site Proton donor is the histidine 106. 108 to 110 (NVR) is a binding site for substrate. A divalent metal cation-binding residues include histidine 145 and histidine 175. An important for dimerization region spans residues 240 to 275 (YVEFNLVWDRGTLFGLQTGGRTESILMSMPPLVRWE). 258–260 (GGR) is a binding site for substrate.

It belongs to the aerobic coproporphyrinogen-III oxidase family. As to quaternary structure, homodimer. Requires a divalent metal cation as cofactor.

The protein resides in the cytoplasm. The enzyme catalyses coproporphyrinogen III + O2 + 2 H(+) = protoporphyrinogen IX + 2 CO2 + 2 H2O. It functions in the pathway porphyrin-containing compound metabolism; protoporphyrin-IX biosynthesis; protoporphyrinogen-IX from coproporphyrinogen-III (O2 route): step 1/1. Involved in the heme biosynthesis. Catalyzes the aerobic oxidative decarboxylation of propionate groups of rings A and B of coproporphyrinogen-III to yield the vinyl groups in protoporphyrinogen-IX. This chain is Oxygen-dependent coproporphyrinogen-III oxidase, found in Shigella boydii serotype 18 (strain CDC 3083-94 / BS512).